A 304-amino-acid polypeptide reads, in one-letter code: Ornithine carbamoyltransferase (304 aa).

Residues 53–56 (STRT), Gln80, Arg104, and 131–134 (HPCQ) each bind carbamoyl phosphate. L-ornithine contacts are provided by residues Asn162, Asp219, and 223–224 (SM). Carbamoyl phosphate is bound by residues 259–260 (CL) and Arg287.

It belongs to the aspartate/ornithine carbamoyltransferase superfamily. OTCase family.

The protein resides in the cytoplasm. It carries out the reaction carbamoyl phosphate + L-ornithine = L-citrulline + phosphate + H(+). Its pathway is amino-acid biosynthesis; L-arginine biosynthesis; L-arginine from L-ornithine and carbamoyl phosphate: step 1/3. In terms of biological role, reversibly catalyzes the transfer of the carbamoyl group from carbamoyl phosphate (CP) to the N(epsilon) atom of ornithine (ORN) to produce L-citrulline. In Herminiimonas arsenicoxydans, this protein is Ornithine carbamoyltransferase.